A 427-amino-acid chain; its full sequence is Methylenetetrahydrofolate--tRNA-(uracil-5-)-methyltransferase TrmFO (427 aa).

6 to 11 is a binding site for FAD; that stretch reads GAGLAG.

The protein belongs to the MnmG family. TrmFO subfamily. It depends on FAD as a cofactor.

It localises to the cytoplasm. It catalyses the reaction uridine(54) in tRNA + (6R)-5,10-methylene-5,6,7,8-tetrahydrofolate + NADH + H(+) = 5-methyluridine(54) in tRNA + (6S)-5,6,7,8-tetrahydrofolate + NAD(+). It carries out the reaction uridine(54) in tRNA + (6R)-5,10-methylene-5,6,7,8-tetrahydrofolate + NADPH + H(+) = 5-methyluridine(54) in tRNA + (6S)-5,6,7,8-tetrahydrofolate + NADP(+). Functionally, catalyzes the folate-dependent formation of 5-methyl-uridine at position 54 (M-5-U54) in all tRNAs. The protein is Methylenetetrahydrofolate--tRNA-(uracil-5-)-methyltransferase TrmFO of Acholeplasma laidlawii (strain PG-8A).